The sequence spans 371 residues: Ubiquitin receptor RAD23b (371 aa).

The Ubiquitin-like domain occupies 1 to 79 (MKLTVKTLKG…LVVMLSKSKS (79 aa)). Residues 79–117 (SGGSAGQASVQTSSVSQPVSATTSSTKPAAPSTTQSSPV) show a composition bias toward low complexity. The interval 79–142 (SGGSAGQASV…DTYGQAASTL (64 aa)) is disordered. Over residues 128 to 142 (PAAQTDTYGQAASTL) the composition is skewed to polar residues. In terms of domain architecture, UBA 1 spans 146–189 (SSLEQMVQQIMEMGGGSWDKETVTRALRAAYNNPERAVDYLYSG). In terms of domain architecture, STI1 spans 242–285 (GTLEFLRNNDQFQQLRTMVHSNPQILQPMLQELGKQNPQLLRLI). A UBA 2 domain is found at 325–365 (PAEQEAIQRLEAMGFDRALVIEAFLACDRNEELAANYLLEN).

This sequence belongs to the RAD23 family. As to quaternary structure, interacts with 'Lys-48'-linked polyubiquitin chains. Interacts with RPN10 via its ubiquitin-like domain. Interacts with UBQ1, UBQ2, UBQ5, UBQ7, UBQ10, UBQ11 and IAA16. Binds to RAD4. In terms of tissue distribution, widely expressed in the whole plant.

Its subcellular location is the nucleus. The protein resides in the cytoplasm. In terms of biological role, may be involved in nucleotide excision repair. Binds and presumably selects ubiquitin-conjugates for destruction. Prefers multiubiquitin chains rather than single ubiquitins, with a binding affinity for 'Lys-48'-linked ubiquitin chains. Acts as a ubiquitin receptor that associates with the 26S proteasomal docking subunit RPN10 for the indirect recognition of ubiquitinated substrates of ubiquitin/26S proteasome-mediated proteolysis (UPP). Involved in UV tolerance in both roots and hypocotyls, specifically in dark conditions. The sequence is that of Ubiquitin receptor RAD23b from Arabidopsis thaliana (Mouse-ear cress).